We begin with the raw amino-acid sequence, 75 residues long: Acyl carrier protein (75 aa).

Positions 1–75 (MIFEKVRDII…DVVEYLSNLE (75 aa)) constitute a Carrier domain. Position 35 is an O-(pantetheine 4'-phosphoryl)serine (Ser35).

This sequence belongs to the acyl carrier protein (ACP) family. In terms of processing, 4'-phosphopantetheine is transferred from CoA to a specific serine of apo-ACP by AcpS. This modification is essential for activity because fatty acids are bound in thioester linkage to the sulfhydryl of the prosthetic group.

It localises to the cytoplasm. Its pathway is lipid metabolism; fatty acid biosynthesis. Carrier of the growing fatty acid chain in fatty acid biosynthesis. The sequence is that of Acyl carrier protein from Thermoanaerobacter pseudethanolicus (strain ATCC 33223 / 39E) (Clostridium thermohydrosulfuricum).